Reading from the N-terminus, the 363-residue chain is Trans-2,3-enoyl-CoA reductase-like (363 aa).

At Ser-37 the chain carries Phosphoserine. 4 helical membrane passes run 143–163 (WTTVFLAEYTGPLLIYLLFYL), 216–235 (NLLKSCAFYWGFTSWIAYYI), 250–270 (VAISAINFLICEAGNHFINVV), and 311–331 (ISFTIMTQTLPVGIFTLLMSI).

This sequence belongs to the steroid 5-alpha reductase family.

The protein localises to the membrane. Its subcellular location is the endoplasmic reticulum. This is Trans-2,3-enoyl-CoA reductase-like (TECRL) from Bos taurus (Bovine).